We begin with the raw amino-acid sequence, 309 residues long: uncharacterized protein (309 aa).

Residues 1–16 are compositionally biased toward basic residues; the sequence is MAGNSRRRGAVRKAGT. The disordered stretch occupies residues 1-70; that stretch reads MAGNSRRRGA…AKRTEETETV (70 aa). Gly-261, Ile-281, and Leu-290 together coordinate S-adenosyl-L-methionine.

This sequence belongs to the class IV-like SAM-binding methyltransferase superfamily. RNA methyltransferase TrmH family.

This is an uncharacterized protein from Mycobacterium avium (strain 104).